Reading from the N-terminus, the 169-residue chain is X polypeptide (169 aa).

Belongs to the IagB/IpgF/P19 family.

The protein is X polypeptide (X) of Escherichia coli.